The primary structure comprises 1177 residues: Tyrosine-protein kinase hopscotch (1177 aa).

Residues 1-41 form a disordered region; that stretch reads MALANGGEDRMDDSSSGRTSLADSASLTNSSLRSGTSSQSI. The span at 16–41 shows a compositional bias: polar residues; sequence SGRTSLADSASLTNSSLRSGTSSQSI. Phosphoserine is present on residues Ser-40 and Ser-321. The 369-residue stretch at 46–414 folds into the FERM domain; sequence GTIRVFNFTT…IYIRLSSKWM (369 aa). The region spanning 433–539 is the SH2; atypical domain; it reads HCHGPIGGAY…YRIPASKYDK (107 aa). Protein kinase domains lie at 582–843 and 892–1164; these read YPDS…AEIL and YNME…HPTD. Residues 898-906 and Lys-926 contribute to the ATP site; that span reads IGRGHYGTV. The Proton acceptor role is filled by Asp-1014. Residues Tyr-1047 and Tyr-1048 each carry the phosphotyrosine; by autocatalysis modification. The segment at 1158 to 1177 is disordered; it reads KVTHPTDGHQSPPNQPTDAE.

The protein belongs to the protein kinase superfamily. Tyr protein kinase family. JAK subfamily. In terms of assembly, forms a complex with Hsp83 and piwi; probably Hop mediates the interaction between piwi and Hsp83.

The protein resides in the endomembrane system. The enzyme catalyses L-tyrosyl-[protein] + ATP = O-phospho-L-tyrosyl-[protein] + ADP + H(+). Its function is as follows. Tyrosine kinase of the non-receptor type, phosphorylates the marelle protein. Required maternally for the establishment of the normal array of embryonic segments: involved in the control of pair-rule gene transcription in a stripe-specific manner. Together with Hsp83 and piwi, mediates canalization, also known as developmental robustness, likely via epigenetic silencing of existing genetic variants and suppression of transposon-induced new genetic variation. In Drosophila melanogaster (Fruit fly), this protein is Tyrosine-protein kinase hopscotch (hop).